A 243-amino-acid polypeptide reads, in one-letter code: Ras-related protein Rab-12 (243 aa).

At methionine 1 the chain carries N-acetylmethionine. Residues 1–36 form a disordered region; the sequence is MDPSAALHRRPAGGSLGAVSPALSGGQARRRKQPPR. Residues serine 15, serine 20, and serine 24 each carry the phosphoserine modification. GTP is bound by residues glycine 51, valine 52, glycine 53, lysine 54, threonine 55, serine 72, and threonine 73. Residue threonine 55 participates in Mg(2+) binding. 2 consecutive short sequence motifs (switch) follow at residues 64–78 and 96–113; these read DTFC…GVDF and DTAG…YYRS. Positions 73 and 96 each coordinate Mg(2+). Residue glycine 99 participates in GTP binding. Serine 105 bears the Phosphoserine; by LRRK2 mark. Positions 154, 155, 157, 185, 186, and 187 each coordinate GTP. S-geranylgeranyl cysteine attachment occurs at residues cysteine 242 and cysteine 243.

This sequence belongs to the small GTPase superfamily. Rab family. In terms of assembly, interacts with RABIF and OPTN. Interacts with LRRK2; interaction facilitates phosphorylation of Ser-105. Interacts with GDI1, GDI2, CHM and CHML; these interactions are disrupted by phosphorylation on Ser-105. Interacts with RILPL1 and RILPL2; these interactions are dependent on phosphorylation of Ser-105. It depends on Mg(2+) as a cofactor. Post-translationally, phosphorylation of Ser-105 in the switch II region by LRRK2 prevents the association of RAB regulatory proteins, including CHM, CHML and RAB GDP dissociation inhibitors GDI1 and GDI2. In terms of tissue distribution, ubiquitously expressed.

It localises to the recycling endosome membrane. The protein resides in the lysosome membrane. The protein localises to the golgi apparatus membrane. Its subcellular location is the cytoplasmic vesicle. It is found in the autophagosome. It catalyses the reaction GTP + H2O = GDP + phosphate + H(+). With respect to regulation, regulated by guanine nucleotide exchange factors (GEFs) including DENND3 which promote the exchange of bound GDP for free GTP. Regulated by GTPase activating proteins (GAPs) which increase the GTP hydrolysis activity. Inhibited by GDP dissociation inhibitors (GDIs). In terms of biological role, the small GTPases Rab are key regulators of intracellular membrane trafficking, from the formation of transport vesicles to their fusion with membranes. Rabs cycle between an inactive GDP-bound form and an active GTP-bound form that is able to recruit to membranes different set of downstream effectors directly responsible for vesicle formation, movement, tethering and fusion. RAB12 may play a role in protein transport from recycling endosomes to lysosomes regulating, for instance, the degradation of the transferrin receptor. Involved in autophagy. The polypeptide is Ras-related protein Rab-12 (Mus musculus (Mouse)).